The primary structure comprises 841 residues: Outer membrane usher protein MyfC (841 aa).

The N-terminal stretch at 1 to 26 is a signal peptide; it reads MFFSLKNSVAKLIAFWAICLVLPVWA. Cysteines 817 and 840 form a disulfide.

Belongs to the fimbrial export usher family.

The protein localises to the cell outer membrane. Its function is as follows. Involved in the export and assembly of the MyfA fimbrial subunit. In Yersinia enterocolitica, this protein is Outer membrane usher protein MyfC (myfC).